The following is a 390-amino-acid chain: Delta-aminolevulinic acid dehydratase, chloroplastic (390 aa).

A chloroplast-targeting transit peptide spans 1 to 24 (MQMMQRNVVGQRPVAGSRRSLVVA). Residues 34–69 (VSTNGKHRTGVPEGTPIVTPQDLPSRPRRNRRSESF) are disordered. The active-site Schiff-base intermediate with substrate is Lys-251. The 5-aminolevulinate site is built by Arg-261 and Lys-281. Glu-297 is a Mg(2+) binding site. The active-site Schiff-base intermediate with substrate is the Lys-312. 2 residues coordinate 5-aminolevulinate: Ser-338 and Tyr-377.

Belongs to the ALAD family. Homooctamer. Mg(2+) is required as a cofactor.

It localises to the plastid. It is found in the chloroplast. It carries out the reaction 2 5-aminolevulinate = porphobilinogen + 2 H2O + H(+). It functions in the pathway porphyrin-containing compound metabolism; protoporphyrin-IX biosynthesis; coproporphyrinogen-III from 5-aminolevulinate: step 1/4. In terms of biological role, catalyzes an early step in the biosynthesis of tetrapyrroles. Binds two molecules of 5-aminolevulinate per subunit, each at a distinct site, and catalyzes their condensation to form porphobilinogen. The protein is Delta-aminolevulinic acid dehydratase, chloroplastic (HEMB) of Chlamydomonas reinhardtii (Chlamydomonas smithii).